The following is a 287-amino-acid chain: Steroidogenic acute regulatory protein, mitochondrial (287 aa).

Residues M1–I61 constitute a mitochondrion transit peptide. The region spanning G66–V279 is the START domain.

May interact with TSPO.

It is found in the mitochondrion. The enzyme catalyses cholesterol(in) = cholesterol(out). It participates in steroid metabolism; cholesterol metabolism. Functionally, plays a key role in steroid hormone synthesis by enhancing the metabolism of cholesterol into pregnenolone. Mediates the transfer of cholesterol from the outer mitochondrial membrane to the inner mitochondrial membrane where it is cleaved to pregnenolone. This Oncorhynchus mykiss (Rainbow trout) protein is Steroidogenic acute regulatory protein, mitochondrial (star).